We begin with the raw amino-acid sequence, 267 residues long: X-box-binding protein 1 (267 aa).

Residues 1–180 are Cytoplasmic-facing; it reads MVVVAAAPSA…VQAQLSPPQN (180 aa). The disordered stretch occupies residues 35–60; the sequence is VPGPRAAGSEASGTPQARKRQRLTHL. S61 bears the Phosphoserine mark. The bZIP domain occupies 63 to 126; sequence EEKALRRKLK…HGLVIENQEL (64 aa). The basic motif stretch occupies residues 65–87; it reads KALRRKLKNRVAAQTARDRKKAR. Residues 69–85 form a nuclear localization signal (NLS) region; sequence RKLKNRVAAQTARDRKK. The segment at 91–126 is leucine-zipper; that stretch reads LEQQVVDLEEENQKLQLENQLLREKTHGLVIENQEL. Residues 181 to 198 form a helical; Signal-anchor for type II membrane protein membrane-spanning segment; sequence IFPWILTLLPLQILSLIS. At 199–267 the chain is on the lumenal side; the sequence is FWAFWTSWTL…FVLTMYTPSL (69 aa).

This sequence belongs to the bZIP family. Isoform 1 interacts with HM13. Isoform 1 interacts with RNF139; the interaction induces ubiquitination and degradation of isoform 1. Isoform 1 interacts (via luminal domain) with DERL1; the interaction obviates the need for ectodomain shedding prior HM13/SPP-mediated XBP1 isoform 1 cleavage. Isoform 1 interacts with HDAC3 and AKT1; the interactions occur in endothelial cell (EC) under disturbed flow. Isoform 1 interacts with the oncoprotein FOS. Interacts with SIRT1. In terms of processing, isoform 1 is ubiquitinated, leading to proteasome-mediated degradation in response to ER stress. Post-translationally, X-box-binding protein 1, cytoplasmic form and luminal form are produced by intramembrane proteolytic cleavage of ER membrane-anchored isoform 1 triggered by HM13/SPP in a DERL1-RNF139-dependent and VCP/p97-independent manner. X-box-binding protein 1, luminal form is ubiquitinated leading to proteasomal degradation. Acetylated by EP300; acetylation positively regulates the transcriptional activity of XBP1. Deacetylated by SIRT1; deacetylation negatively regulates the transcriptional activity of XBP1.

Its subcellular location is the nucleus. It is found in the endoplasmic reticulum. The protein localises to the cytoplasm. It localises to the endoplasmic reticulum membrane. The protein resides in the membrane. Its function is as follows. Functions as a transcription factor during endoplasmic reticulum (ER) stress by regulating the unfolded protein response (UPR). Required for cardiac myogenesis and hepatogenesis during embryonic development, and the development of secretory tissues such as exocrine pancreas and salivary gland. Involved in terminal differentiation of B lymphocytes to plasma cells and production of immunoglobulins. Modulates the cellular response to ER stress in a PIK3R-dependent manner. Binds to the cis-acting X box present in the promoter regions of major histocompatibility complex class II genes. Involved in VEGF-induced endothelial cell (EC) proliferation and retinal blood vessel formation during embryonic development but also for angiogenesis in adult tissues under ischemic conditions. Functions also as a major regulator of the UPR in obesity-induced insulin resistance and type 2 diabetes for the management of obesity and diabetes prevention. Acts as a weak transcriptional factor. Together with HDAC3, contributes to the activation of NFE2L2-mediated HMOX1 transcription factor gene expression in a PI(3)K/mTORC2/Akt-dependent signaling pathway leading to EC survival under disturbed flow/oxidative stress. Binds to the ER stress response element (ERSE) upon ER stress. Binds to the consensus 5'-GATGACGTG[TG]N(3)[AT]T-3' sequence related to cAMP responsive element (CRE)-like sequences. Associates preferentially to the HDAC3 gene promoter region in a static flow-dependent manner. Binds to the CDH5/VE-cadherin gene promoter region. This is X-box-binding protein 1 from Rattus norvegicus (Rat).